The primary structure comprises 723 residues: MIYQAETLQVKEVQDGVAEILFCAPNSVNKLDLATLASLDKALDALTAHSGLKGVMLTSDKEAFIVGADITEFLGLFAKPEEELDQWLQFANSIFNKLEDLPVPTVAVVKGHTLGGGCECVLATDLRIGDKTTSIGLPETKLGIMPGFGGCVRLPRVIGADSAMEIITQGKACRAEEALKIGLLDAVVDSDRLYASALQTLTDAINEKIDWKARRQQKTSALTLSKLEAMMSFTMAKGLVAQVAGPHYPAPMTAVVTIEEGARFARNQALDIERKHFVKLAKSEEAKALVGLFLNDQYIKGIAKKAAKSANKETQRAAVLGAGIMGGGIAYQSALKGVPVIMKDIAQASLDLGMTEASKLLNKQLERGKIDGFKMAGILASITPSLHYAGIDNADIIVEAVVENPKVKAAVLSEVEEQVSEETVLTSNTSTIPINLLAKSLKRPENFCGMHFFNPVHRMPLVEIIRGEHTSDETINRVVAYAAKMGKSPIVVNDCPGFFVNRVLFPYFGGFSMLLRDGADFTQIDKVMERKFGWPMGPAYLLDVVGIDTAHHAQAVMAQGFPERMGKQGRDAIDALFEANKYGQKNGSGFYTYTMDKKGKPKKAFSDEIVPILAPVCAAQQAFDDQTIIQRMMIPMINEVVLCLQEGIIASAQEADMALVYGLGFPPFRGGVFRYLDSVGIANFVAMAQQHVELGAMYQVPQMLIDMAEKGQTFYGAQQQGSI.

The enoyl-CoA hydratase/isomerase stretch occupies residues 1–189 (MIYQAETLQV…KIGLLDAVVD (189 aa)). Aspartate 296 lines the substrate pocket. The interval 311-723 (NKETQRAAVL…FYGAQQQGSI (413 aa)) is 3-hydroxyacyl-CoA dehydrogenase. NAD(+) is bound by residues methionine 325, aspartate 344, 401-403 (VVE), lysine 408, and serine 430. The active-site For 3-hydroxyacyl-CoA dehydrogenase activity is the histidine 451. Asparagine 454 provides a ligand contact to NAD(+). Positions 501 and 661 each coordinate substrate.

This sequence in the N-terminal section; belongs to the enoyl-CoA hydratase/isomerase family. In the C-terminal section; belongs to the 3-hydroxyacyl-CoA dehydrogenase family. In terms of assembly, heterotetramer of two alpha chains (FadB) and two beta chains (FadA).

The catalysed reaction is a (3S)-3-hydroxyacyl-CoA + NAD(+) = a 3-oxoacyl-CoA + NADH + H(+). It catalyses the reaction a (3S)-3-hydroxyacyl-CoA = a (2E)-enoyl-CoA + H2O. The enzyme catalyses a 4-saturated-(3S)-3-hydroxyacyl-CoA = a (3E)-enoyl-CoA + H2O. It carries out the reaction (3S)-3-hydroxybutanoyl-CoA = (3R)-3-hydroxybutanoyl-CoA. The catalysed reaction is a (3Z)-enoyl-CoA = a 4-saturated (2E)-enoyl-CoA. It catalyses the reaction a (3E)-enoyl-CoA = a 4-saturated (2E)-enoyl-CoA. The protein operates within lipid metabolism; fatty acid beta-oxidation. Involved in the aerobic and anaerobic degradation of long-chain fatty acids via beta-oxidation cycle. Catalyzes the formation of 3-oxoacyl-CoA from enoyl-CoA via L-3-hydroxyacyl-CoA. It can also use D-3-hydroxyacyl-CoA and cis-3-enoyl-CoA as substrate. The sequence is that of Fatty acid oxidation complex subunit alpha from Vibrio vulnificus (strain CMCP6).